The following is a 676-amino-acid chain: Pescadillo homolog (676 aa).

Residues 298 to 327 (IAAMADDEDEQEVEMAEADAEDDDEEENTE) are a coiled coil. Disordered stretches follow at residues 298–338 (IAAM…TAPD), 413–439 (PLAN…STKP), 478–502 (VKPK…EAEA), and 515–676 (EVDD…AERA). Acidic residues predominate over residues 302–327 (ADDEDEQEVEMAEADAEDDDEEENTE). The BRCT domain maps to 351-466 (EIASLFAPFT…KLLRPDLYAP (116 aa)). The span at 415-427 (ANGASAAGAEDAA) shows a compositional bias: low complexity. 3 stretches are compositionally biased toward acidic residues: residues 515–524 (EVDDDEDMDA), 539–557 (DVAD…DAEG), and 565–577 (FDDE…DISE). A coiled-coil region spans residues 568–676 (ESEAESDISE…EKAKAAAERA (109 aa)). Composition is skewed to basic and acidic residues over residues 579 to 608 (EAAR…KKEQ), 620 to 631 (KRAEEEERDRQK), 643 to 659 (KRIE…SENL), and 666 to 676 (LEKAKAAAERA).

It belongs to the pescadillo family. As to quaternary structure, component of the NOP7 complex, composed of ERB1, NOP7 and YTM1. The complex is held together by ERB1, which interacts with NOP7 via its N-terminal domain and with YTM1 via a high-affinity interaction between the seven-bladed beta-propeller domains of the 2 proteins. The NOP7 complex associates with the 66S pre-ribosome.

Its subcellular location is the nucleus. The protein localises to the nucleolus. It is found in the nucleoplasm. Its function is as follows. Component of the NOP7 complex, which is required for maturation of the 25S and 5.8S ribosomal RNAs and formation of the 60S ribosome. The sequence is that of Pescadillo homolog from Phaeosphaeria nodorum (strain SN15 / ATCC MYA-4574 / FGSC 10173) (Glume blotch fungus).